The primary structure comprises 356 residues: Heparan sulfate 2-O-sulfotransferase 1 (356 aa).

Residues 1-11 (MGLLRIMMPPK) are Cytoplasmic-facing. Residues 12–28 (LQLLAVVAFAVAMLFLE) traverse the membrane as a helical; Signal-anchor for type II membrane protein segment. A coiled-coil region spans residues 24–51 (MLFLENQIQKLEESRSKLERAIARHEVR). The Lumenal segment spans residues 29–356 (NQIQKLEESR…FYEKIYPKSN (328 aa)). The adenosine 3',5'-bisphosphate site is built by lysine 83, threonine 84, alanine 85, serine 86, threonine 87, and serine 88. Asparagine 108 and asparagine 127 each carry an N-linked (GlcNAc...) asparagine glycan. Residues histidine 140 and histidine 142 contribute to the active site. Adenosine 3',5'-bisphosphate is bound by residues arginine 164 and serine 172. Cystine bridges form between cysteine 201–cysteine 209 and cysteine 222–cysteine 228. Positions 279, 285, 290, and 293 each coordinate adenosine 3',5'-bisphosphate.

This sequence belongs to the sulfotransferase 3 family. As to quaternary structure, homotrimer. Interacts with the C5-epimerase GLCE. N-glycosylated.

The protein resides in the golgi apparatus membrane. In terms of biological role, catalyzes the transfer of a sulfo group from 3'-phospho-5'-adenylyl sulfate (PAPS) to the 2-OH position of iduronic acid (IdoA) or glucuronic acid (GlcA) within the heparan sulfate (HS) chain and participates in HS biosynthesis. Required for metanephric development of kidney formation, suggesting that 2-O-sulfation within HS is essential for signaling between ureteric bud and metanephric mesenchyme. The protein is Heparan sulfate 2-O-sulfotransferase 1 of Pongo abelii (Sumatran orangutan).